We begin with the raw amino-acid sequence, 409 residues long: Argininosuccinate synthase (409 aa).

ATP is bound by residues 10–18 and Ala37; that span reads AYSGGLDTS. L-citrulline is bound by residues Tyr90 and Ser95. Gly120 is an ATP binding site. 3 residues coordinate L-aspartate: Thr122, Asn126, and Asp127. Asn126 serves as a coordination point for L-citrulline. L-citrulline contacts are provided by Arg130, Ser182, Ser191, Glu267, and Tyr279.

It belongs to the argininosuccinate synthase family. Type 1 subfamily. In terms of assembly, homotetramer.

It localises to the cytoplasm. It carries out the reaction L-citrulline + L-aspartate + ATP = 2-(N(omega)-L-arginino)succinate + AMP + diphosphate + H(+). Its pathway is amino-acid biosynthesis; L-arginine biosynthesis; L-arginine from L-ornithine and carbamoyl phosphate: step 2/3. This Thiobacillus denitrificans (strain ATCC 25259 / T1) protein is Argininosuccinate synthase.